The following is a 98-amino-acid chain: NADH-ubiquinone oxidoreductase chain 4L (98 aa).

The next 3 membrane-spanning stretches (helical) occupy residues 1-21 (MSMVYFNIFMAFTVSFVGLLM), 29-49 (SLLCLEGMMLSLFVMMSMTIL), and 61-81 (IILLVFAACEAALGLSLLVMV).

It belongs to the complex I subunit 4L family. As to quaternary structure, core subunit of respiratory chain NADH dehydrogenase (Complex I) which is composed of 45 different subunits.

The protein resides in the mitochondrion inner membrane. The catalysed reaction is a ubiquinone + NADH + 5 H(+)(in) = a ubiquinol + NAD(+) + 4 H(+)(out). In terms of biological role, core subunit of the mitochondrial membrane respiratory chain NADH dehydrogenase (Complex I) which catalyzes electron transfer from NADH through the respiratory chain, using ubiquinone as an electron acceptor. Part of the enzyme membrane arm which is embedded in the lipid bilayer and involved in proton translocation. This is NADH-ubiquinone oxidoreductase chain 4L (MT-ND4L) from Arctocephalus australis (South American fur seal).